Here is a 310-residue protein sequence, read N- to C-terminus: Transcription factor MYB53 (310 aa).

HTH myb-type domains lie at 9–61 (ETGL…TNYL) and 62–116 (RPDI…KKKL). 2 DNA-binding regions (H-T-H motif) span residues 37-61 (WSALPKLAGLNRCGKSCRLRWTNYL) and 89-112 (WSMIASHLPGRTDNEIKNFWNTHL).

Interacts with FBX5. In terms of tissue distribution, highly expressed in roots and at lower levels in leaves, stems and flowers.

It localises to the nucleus. Functionally, probable transcription factor. The chain is Transcription factor MYB53 from Arabidopsis thaliana (Mouse-ear cress).